The primary structure comprises 184 residues: Ribosome-recycling factor (184 aa).

It belongs to the RRF family.

It is found in the cytoplasm. In terms of biological role, responsible for the release of ribosomes from messenger RNA at the termination of protein biosynthesis. May increase the efficiency of translation by recycling ribosomes from one round of translation to another. This chain is Ribosome-recycling factor, found in Acinetobacter baylyi (strain ATCC 33305 / BD413 / ADP1).